Consider the following 198-residue polypeptide: Peroxiredoxin-2 (198 aa).

Ala-2 is subject to N-acetylalanine. The region spanning 6–164 (AQIGKSAPDF…ALRLVQAFQY (159 aa)) is the Thioredoxin domain. The residue at position 11 (Ser-11) is a Phosphoserine. The Cysteine sulfenic acid (-SOH) intermediate role is filled by Cys-51. A Phosphoserine modification is found at Ser-112. Thr-182 bears the Phosphothreonine mark. N6-acetyllysine is present on Lys-196.

This sequence belongs to the peroxiredoxin family. AhpC/Prx1 subfamily. Homodimer; disulfide-linked, upon oxidation. 5 homodimers assemble to form a ring-like decamer. Interacts with TIPIN. Post-translationally, the enzyme can be inactivated by further oxidation of the cysteine sulfenic acid (C(P)-SOH) to sulphinic acid (C(P)-SO2H) instead of its condensation to a disulfide bond. It can be reactivated by forming a transient disulfide bond with sulfiredoxin SRXN1, which reduces the cysteine sulfinic acid in an ATP- and Mg-dependent manner. In terms of processing, acetylation increases resistance to transition to high molecular-mass complexes. Deacetylated by HDAC6 which decreases reducing activity. As to expression, widely expressed with highest levels in bone marrow. High levels also found in heart, brain, kidney and skeletal muscle. Lower levels in liver, lung and thymus.

Its subcellular location is the cytoplasm. It carries out the reaction a hydroperoxide + [thioredoxin]-dithiol = an alcohol + [thioredoxin]-disulfide + H2O. Thiol-specific peroxidase that catalyzes the reduction of hydrogen peroxide and organic hydroperoxides to water and alcohols, respectively. Plays a role in cell protection against oxidative stress by detoxifying peroxides and as sensor of hydrogen peroxide-mediated signaling events. Might participate in the signaling cascades of growth factors and tumor necrosis factor-alpha by regulating the intracellular concentrations of H(2)O(2). This is Peroxiredoxin-2 (Prdx2) from Mus musculus (Mouse).